Here is a 340-residue protein sequence, read N- to C-terminus: DNA polymerase III subunit delta' (340 aa).

The DNA polymerase holoenzyme is a complex that contains 10 different types of subunits. These subunits are organized into 3 functionally essential subassemblies: the pol III core, the beta sliding clamp processivity factor and the clamp-loading complex. The pol III core (subunits alpha,epsilon and theta) contains the polymerase and the 3'-5' exonuclease proofreading activities. The polymerase is tethered to the template via the sliding clamp processivity factor. The clamp-loading complex assembles the beta processivity factor onto the primer template and plays a central role in the organization and communication at the replication fork. This complex contains delta, delta', psi and chi, and copies of either or both of two different DnaX proteins, gamma and tau. The composition of the holoenzyme is, therefore: (alpha,epsilon,theta)[2]-(gamma/tau)[3]-delta,delta', psi,chi-beta[4].

It carries out the reaction DNA(n) + a 2'-deoxyribonucleoside 5'-triphosphate = DNA(n+1) + diphosphate. Its function is as follows. DNA polymerase III is a complex, multichain enzyme responsible for most of the replicative synthesis in bacteria. This DNA polymerase also exhibits 3' to 5' exonuclease activity. The polypeptide is DNA polymerase III subunit delta' (holB) (Yersinia pestis).